The primary structure comprises 196 residues: UPF0134 protein MPN_501 (196 aa).

The protein belongs to the UPF0134 family.

The polypeptide is UPF0134 protein MPN_501 (Mycoplasma pneumoniae (strain ATCC 29342 / M129 / Subtype 1) (Mycoplasmoides pneumoniae)).